The sequence spans 343 residues: Protease inhibitor Egf1.5a (343 aa).

The N-terminal stretch at 1–28 (MYIDTGIMSNNIFLFAFFALVGLTRIEA) is a signal peptide. Residues 52–104 (CRENEHYNSTRIECEDECNDRNNKLCYRFQQFCWCNEGYIRNSSHICVKLEDC) enclose the TIL domain.

It belongs to the polydnaviridae EGF-like motif protein family. In terms of assembly, interacts with host PAP1, PAP3 and SPH2.

Its function is as follows. Counteracts the host humoral immune response by inhibiting the processing and the amidolytic activity of host PAP1 and PAP3. Thereby, melanization of host hemolymph, normally producing several reactive intermediates toxic for viruses, is deregulated and proper immune response cannot occur. The polypeptide is Protease inhibitor Egf1.5a (O1) (Microplitis demolitor bracovirus (isolate Webb) (MdBV)).